We begin with the raw amino-acid sequence, 285 residues long: ATP synthase subunit a (285 aa).

Transmembrane regions (helical) follow at residues 41-61, 102-122, 164-184, 197-217, 226-246, and 252-272; these read TWHV…LWIF, IAPL…MDLI, LGVF…GGFI, VFVQ…ALVS, LFGN…IGFM, and FVWA…FMML.

It belongs to the ATPase A chain family. As to quaternary structure, F-type ATPases have 2 components, CF(1) - the catalytic core - and CF(0) - the membrane proton channel. CF(1) has five subunits: alpha(3), beta(3), gamma(1), delta(1), epsilon(1). CF(0) has three main subunits: a(1), b(2) and c(9-12). The alpha and beta chains form an alternating ring which encloses part of the gamma chain. CF(1) is attached to CF(0) by a central stalk formed by the gamma and epsilon chains, while a peripheral stalk is formed by the delta and b chains.

The protein resides in the cell inner membrane. In terms of biological role, key component of the proton channel; it plays a direct role in the translocation of protons across the membrane. The protein is ATP synthase subunit a of Pseudoalteromonas translucida (strain TAC 125).